We begin with the raw amino-acid sequence, 188 residues long: Large ribosomal subunit protein eL18 (188 aa).

Residues 147-188 (EANKHFGPAPGVPHSHTKAHVRSKGRQFERARGRRTSKGYKK) form a disordered region. 2 stretches are compositionally biased toward basic residues: residues 161 to 171 (SHTKAHVRSKG) and 178 to 188 (RGRRTSKGYKK).

The protein belongs to the eukaryotic ribosomal protein eL18 family.

It localises to the cytoplasm. This chain is Large ribosomal subunit protein eL18 (RpL18), found in Diaphorina citri (Asian citrus psyllid).